A 253-amino-acid polypeptide reads, in one-letter code: Triosephosphate isomerase (253 aa).

Position 9-11 (9-11 (NWK)) interacts with substrate. His98 acts as the Electrophile in catalysis. Glu170 serves as the catalytic Proton acceptor. Substrate contacts are provided by residues Gly176, Ser216, and 237-238 (GG).

Belongs to the triosephosphate isomerase family. In terms of assembly, homodimer.

It localises to the cytoplasm. It catalyses the reaction D-glyceraldehyde 3-phosphate = dihydroxyacetone phosphate. It participates in carbohydrate biosynthesis; gluconeogenesis. Its pathway is carbohydrate degradation; glycolysis; D-glyceraldehyde 3-phosphate from glycerone phosphate: step 1/1. Functionally, involved in the gluconeogenesis. Catalyzes stereospecifically the conversion of dihydroxyacetone phosphate (DHAP) to D-glyceraldehyde-3-phosphate (G3P). The protein is Triosephosphate isomerase of Amoebophilus asiaticus (strain 5a2).